A 335-amino-acid polypeptide reads, in one-letter code: Nucleoid-associated protein YejK (335 aa).

It belongs to the YejK family.

The protein resides in the cytoplasm. Its subcellular location is the nucleoid. This is Nucleoid-associated protein YejK from Escherichia coli (strain K12 / MC4100 / BW2952).